The sequence spans 471 residues: Regulator of microtubule dynamics protein 3 (471 aa).

Topologically, residues 1-12 (MSRLGALGGSRA) are mitochondrial intermembrane. Residues 13-35 (GLGLLLGTAAGLGFLCVLYSQRW) form a helical membrane-spanning segment. Topologically, residues 36-471 (KRTQRHGRSQ…LEELEVILGK (436 aa)) are cytoplasmic. Phosphoserine is present on residues Ser-44, Ser-46, Ser-50, and Ser-57. A coiled-coil region spans residues 91–125 (LDRLDFVLTSLMALRREVEELQRSLQGLAGEIVGE). The FFAT motif lies at 157–163 (VYFTASS). Thr-160 bears the Phosphothreonine mark. A disordered region spans residues 168–203 (TDAESEGGYTTANAESDYERDSDKESEDAEDEVSCE). Ser-183, Ser-193, Ser-212, and Ser-233 each carry phosphoserine. Residues 191–201 (KESEDAEDEVS) are compositionally biased toward acidic residues.

Belongs to the RMDN family. As to quaternary structure, interacts with PTPN2. Interacts with microtubules. Interacts with VAPB. Interacts (via FFAT motif) with MOSPD2 (via MSP domain). Interacts (via phosphorylated FFAT motif) with MOSPD2, VAPA and VAPB. Post-translationally, phosphorylation at Thr-160 of the FFAT motif activates interaction with MOSPD2, VAPA and VAPB.

It is found in the mitochondrion outer membrane. The protein localises to the cytoplasm. Its subcellular location is the nucleus. It localises to the cytoskeleton. The protein resides in the spindle. It is found in the spindle pole. Functionally, involved in cellular calcium homeostasis regulation. May participate in differentiation and apoptosis of keratinocytes. Overexpression induces apoptosis. This chain is Regulator of microtubule dynamics protein 3, found in Rattus norvegicus (Rat).